Reading from the N-terminus, the 142-residue chain is Hemoglobin subunit beta-C (142 aa).

The region spanning 1-142 (MPNKALITGF…VASALAHRYH (142 aa)) is the Globin domain. Residues histidine 59 and histidine 88 each contribute to the heme b site.

Belongs to the globin family. In terms of assembly, heterotetramer of two alpha chains and two beta chains. In terms of tissue distribution, red blood cells.

Involved in oxygen transport from the lung to the various peripheral tissues. This Capra hircus (Goat) protein is Hemoglobin subunit beta-C (HBBC).